The sequence spans 639 residues: Putative oxidoreductase UacF (639 aa).

5 4Fe-4S ferredoxin-type domains span residues 3 to 32, 47 to 77, 78 to 107, 110 to 139, and 201 to 235; these read KFIA…ENWP, KGQA…TFQS, DSVQ…MVDT, QKCD…LMDD, and QQAT…YIRL. [4Fe-4S] cluster is bound by residues Cys12, Cys15, Cys18, Cys22, Cys56, Cys59, Cys64, Cys68, Cys87, Cys90, Cys93, Cys97, Cys112, Cys115, Cys125, Cys129, Cys210, Cys213, Cys219, and Cys223.

The cofactor is [4Fe-4S] cluster.

In terms of biological role, involved in formate-dependent uric acid degradation under microaerobic and anaerobic conditions. May reduce the enzymes necessary for uric acid degradation. This chain is Putative oxidoreductase UacF, found in Escherichia coli (strain K12).